The sequence spans 487 residues: Probable glutamate receptor (487 aa).

The first 23 residues, 1–23, serve as a signal peptide directing secretion; the sequence is MDKGQHFVFFVLTTVLLLRESSH. Over 24–169 the chain is Extracellular; that stretch reads AGAMRNDAAA…FFHFLAPFSK (146 aa). N104 carries an N-linked (GlcNAc...) asparagine glycan. Residues 170 to 190 traverse the membrane as a helical segment; it reads ETWTGLLFAYILTCFCLFLVA. Topologically, residues 191–235 are cytoplasmic; it reads RLSPCEWNEPKNEENHFTFLNSLWFGAGALALQGVTPRPKALSVR. A helical membrane pass occupies residues 236 to 256; sequence VIAAIWWLFTIALLAAYIANF. Residues 257–419 lie on the Extracellular side of the membrane; the sequence is TALLSSGSEQ…ERWSPLQPQA (163 aa). A helical membrane pass occupies residues 420–440; it reads LGGLFLTLAIGLALGVIAAVV. Topologically, residues 441–487 are cytoplasmic; that stretch reads ELSNKSRHAAGHVKKSCCSIFTEEMCTRLRIKENTRQSQETSGRANA.

It belongs to the glutamate-gated ion channel (TC 1.A.10.1) family.

The protein resides in the cell membrane. It localises to the postsynaptic cell membrane. Receptor for glutamate. L-glutamate acts as an excitatory neurotransmitter at many synapses in the central nervous system. The postsynaptic actions of Glu are mediated by a variety of receptors that are named according to their selective agonists. The protein is Probable glutamate receptor (KBP) of Anas platyrhynchos (Mallard).